Reading from the N-terminus, the 414-residue chain is MSWDQVWIDINIATMDANIGEPYGAITQAAMAVKDGKIAWLGPRSELPEFDVLATPVYRGKGNWVTPGLIDAHTHLVFAGSRANEFELRLKGASYEEIARAGGGIISTVKACREADEAELFELGRQRLNALAKEGVTTVEIKSGYGLDIETELKLLRVARELGKHHHVDIKTTFLGAHAIPSEYKDAANSTERSDAYVDLVVNEMLPAVMAENLADAVDVFCEGIAFNLAQTKRVFTAAKQAGLDIKLHAEQLSNIGGSQLAAQMGALSVDHIEYLDEAGVKALSESGTCAVLLPGAFYFLRETKLPPIDLLRQYKVPMVVASDYNPGSSPICSSLLMLNMACTLFRLTPEEALAGMTVNAAKALGIGDNVGHLAVGMQADFCLWNISSAAELAYSYGVDRLIDVVKTGKLVHQ.

Fe(3+) is bound by residues histidine 73 and histidine 75. Zn(2+) contacts are provided by histidine 73 and histidine 75. Residues arginine 82, tyrosine 145, and histidine 178 each contribute to the 4-imidazolone-5-propanoate site. Tyrosine 145 serves as a coordination point for N-formimidoyl-L-glutamate. Histidine 249 is a Fe(3+) binding site. Histidine 249 lines the Zn(2+) pocket. Glutamine 252 provides a ligand contact to 4-imidazolone-5-propanoate. Aspartate 324 lines the Fe(3+) pocket. Position 324 (aspartate 324) interacts with Zn(2+). N-formimidoyl-L-glutamate-binding residues include asparagine 326 and glycine 328. Serine 329 serves as a coordination point for 4-imidazolone-5-propanoate.

This sequence belongs to the metallo-dependent hydrolases superfamily. HutI family. Requires Zn(2+) as cofactor. It depends on Fe(3+) as a cofactor.

The protein localises to the cytoplasm. It carries out the reaction 4-imidazolone-5-propanoate + H2O = N-formimidoyl-L-glutamate. It participates in amino-acid degradation; L-histidine degradation into L-glutamate; N-formimidoyl-L-glutamate from L-histidine: step 3/3. Its function is as follows. Catalyzes the hydrolytic cleavage of the carbon-nitrogen bond in imidazolone-5-propanoate to yield N-formimidoyl-L-glutamate. It is the third step in the universal histidine degradation pathway. This is Imidazolonepropionase from Shewanella denitrificans (strain OS217 / ATCC BAA-1090 / DSM 15013).